The following is a 108-amino-acid chain: Transmembrane protein 141 (108 aa).

2 helical membrane-spanning segments follow: residues 32–52 (MKGV…QMFI) and 58–78 (YPLQ…SYGV).

The protein belongs to the TMEM141 family.

The protein resides in the membrane. The chain is Transmembrane protein 141 (TMEM141) from Homo sapiens (Human).